The sequence spans 333 residues: Phosphoribosylformylglycinamidine cyclo-ligase (333 aa).

This sequence belongs to the AIR synthase family.

It localises to the cytoplasm. It carries out the reaction 2-formamido-N(1)-(5-O-phospho-beta-D-ribosyl)acetamidine + ATP = 5-amino-1-(5-phospho-beta-D-ribosyl)imidazole + ADP + phosphate + H(+). It participates in purine metabolism; IMP biosynthesis via de novo pathway; 5-amino-1-(5-phospho-D-ribosyl)imidazole from N(2)-formyl-N(1)-(5-phospho-D-ribosyl)glycinamide: step 2/2. The polypeptide is Phosphoribosylformylglycinamidine cyclo-ligase (Methanosarcina barkeri (strain Fusaro / DSM 804)).